The primary structure comprises 512 residues: GMP synthase [glutamine-hydrolyzing] (512 aa).

In terms of domain architecture, Glutamine amidotransferase type-1 spans 7–197; it reads TIIVLDFGSQ…VFGVCGCSEG (191 aa). The active-site Nucleophile is Cys84. Residues His171 and Glu173 contribute to the active site. The GMPS ATP-PPase domain occupies 198–387; sequence WNMENFIEVE…LGIPDEIVWR (190 aa). An ATP-binding site is contributed by 225–231; sequence SGGVDSS.

Homodimer.

It catalyses the reaction XMP + L-glutamine + ATP + H2O = GMP + L-glutamate + AMP + diphosphate + 2 H(+). Its pathway is purine metabolism; GMP biosynthesis; GMP from XMP (L-Gln route): step 1/1. In terms of biological role, catalyzes the synthesis of GMP from XMP. This is GMP synthase [glutamine-hydrolyzing] from Bacillus cereus (strain G9842).